Reading from the N-terminus, the 122-residue chain is Large ribosomal subunit protein uL18 (122 aa).

The protein belongs to the universal ribosomal protein uL18 family. As to quaternary structure, part of the 50S ribosomal subunit; part of the 5S rRNA/L5/L18/L25 subcomplex. Contacts the 5S and 23S rRNAs.

Functionally, this is one of the proteins that bind and probably mediate the attachment of the 5S RNA into the large ribosomal subunit, where it forms part of the central protuberance. This chain is Large ribosomal subunit protein uL18, found in Thermosipho africanus (strain TCF52B).